Consider the following 153-residue polypeptide: Transcriptional repressor NrdR (153 aa).

The segment at 3–34 is a zinc-finger region; the sequence is CPFCNSTDTQVKDSRSIENDMLIRRRRVCLVC. In terms of domain architecture, ATP-cone spans 49–139; the sequence is FMVVKKNGET…VYMNFRNIND (91 aa).

Belongs to the NrdR family. The cofactor is Zn(2+).

Negatively regulates transcription of bacterial ribonucleotide reductase nrd genes and operons by binding to NrdR-boxes. This chain is Transcriptional repressor NrdR, found in Ehrlichia chaffeensis (strain ATCC CRL-10679 / Arkansas).